Reading from the N-terminus, the 508-residue chain is Cytochrome P450 monooxygenase lepD (508 aa).

The helical transmembrane segment at 22–42 (IAAAVAVVASIVIYLALSSFF) threads the bilayer. Asparagine 53 and asparagine 416 each carry an N-linked (GlcNAc...) asparagine glycan. Cysteine 454 contacts heme.

It belongs to the cytochrome P450 family. Heme is required as a cofactor.

Its subcellular location is the membrane. Cytochrome P450 monooxygenase; part of the gene cluster 23 that mediates the biosynthesis of a family of 2-pyridones known as leporins. The hybrid PKS-NRPS synthetase lepA and the enoyl reductase lepG are responsible for fusion of phenylalanine with a hexaketide and subsequent release of the stable tetramic acid precursor, pre-leporin C. Because lepA lacks a designated enoylreductase (ER) domain, the required activity is provided the enoyl reductase lepG. It is possible that the dehydrogenase lepF also participates in production of pre-leporin C. Cytochrome P450 monooxygenase lepH is then required for the ring expansion step to yield leporin C. Leporin C is then presumably further oxidized by the N-hydroxylase lepD to form leporin B. LepI may possess a function in biosynthesis upstream of lepA. Leporin B is further oxidized in the presence of ferric ion to give the leporin B trimer-iron chelate, but whether or not this reaction is catalyzed by an enzyme in the pathway or by ferric ion is not determined yet. This Aspergillus flavus (strain ATCC 200026 / FGSC A1120 / IAM 13836 / NRRL 3357 / JCM 12722 / SRRC 167) protein is Cytochrome P450 monooxygenase lepD.